A 168-amino-acid chain; its full sequence is Photosystem I assembly protein Ycf3 (168 aa).

TPR repeat units lie at residues 35-68 (AFTY…EIDP), 72-105 (SYIL…NPFL), and 120-153 (GEQA…TPGN).

It belongs to the Ycf3 family.

It localises to the plastid. The protein localises to the chloroplast thylakoid membrane. Its function is as follows. Essential for the assembly of the photosystem I (PSI) complex. May act as a chaperone-like factor to guide the assembly of the PSI subunits. This is Photosystem I assembly protein Ycf3 from Oenothera elata subsp. hookeri (Hooker's evening primrose).